Consider the following 278-residue polypeptide: UPF0276 protein Shew_2240 (278 aa).

It belongs to the UPF0276 family.

The chain is UPF0276 protein Shew_2240 from Shewanella loihica (strain ATCC BAA-1088 / PV-4).